Consider the following 158-residue polypeptide: Transcription factor HY5 (158 aa).

Low complexity predominate over residues 1–25 (MQEQATSSIAASSLPSSSERSSSSA). A disordered region spans residues 1-105 (MQEQATSSIA…NRVSAQQARE (105 aa)). Residues 26–44 (LHHELKEGMESDDEIRRVP) are compositionally biased toward basic and acidic residues. Positions 35–46 (ESDDEIRRVPEM) are interaction with COP1. The span at 47-58 (GGEATGTTSASG) shows a compositional bias: low complexity. Residues 86-149 (ENKRLKRLLR…QMLRHILKNT (64 aa)) form the bZIP domain. Residues 88–108 (KRLKRLLRNRVSAQQARERKK) are basic motif. A leucine-zipper region spans residues 114-142 (LEARVKELETKNAELEERLSTLQNENQML).

Belongs to the bZIP family. Interacts with COP1. Ubiquitinated by COP1. Ubiquitination takes place in darkness and leads to its subsequent degradation, thereby preventing to activate photomorphogenesis signals.

The protein localises to the nucleus. Its function is as follows. Transcription factor that promotes photomorphogenesis in the light and positively regulates fruit pigmentation and fruit nutritional quality. Probably acts downstream of the light receptor network and directly affects transcription of light-induced genes. The protein is Transcription factor HY5 (HY5) of Solanum lycopersicum (Tomato).